The sequence spans 139 residues: Large-conductance mechanosensitive channel (139 aa).

2 helical membrane passes run 9–29 (AFAV…GAAF) and 79–99 (IQTV…VKAI).

Belongs to the MscL family. Homopentamer.

It is found in the cell inner membrane. Its function is as follows. Channel that opens in response to stretch forces in the membrane lipid bilayer. May participate in the regulation of osmotic pressure changes within the cell. This Pseudomonas putida (strain GB-1) protein is Large-conductance mechanosensitive channel.